A 399-amino-acid chain; its full sequence is uncharacterized protein (399 aa).

The next 10 helical transmembrane spans lie at 6-26 (HLTF…LIIP), 27-47 (KGYN…FIPL), 60-80 (LIFS…INKD), 111-131 (ILYA…FQKF), 147-167 (MGNI…HFFI), 173-193 (STLF…LSGA), 195-215 (GGWI…KEFI), 220-240 (IITL…SPKF), 328-348 (GLVG…YFIK), and 362-382 (ILGI…SFLA).

Its subcellular location is the cell membrane. This is an uncharacterized protein from Haemophilus influenzae (strain ATCC 51907 / DSM 11121 / KW20 / Rd).